Reading from the N-terminus, the 489-residue chain is Betaine aldehyde dehydrogenase (489 aa).

2 residues coordinate K(+): Thr26 and Asp93. Residue 150-152 (GAW) participates in NAD(+) binding. Lys162 functions as the Charge relay system in the catalytic mechanism. 176–179 (KPSE) is a binding site for NAD(+). Residue Ile180 participates in K(+) binding. 229–232 (GVET) is a binding site for NAD(+). Leu245 is a K(+) binding site. The active-site Proton acceptor is the Glu251. NAD(+) contacts are provided by Gly253, Cys285, and Glu386. The Nucleophile role is filled by Cys285. Position 285 is a cysteine sulfenic acid (-SOH) (Cys285). Residues Lys456 and Gly459 each coordinate K(+). The active-site Charge relay system is Glu463.

Belongs to the aldehyde dehydrogenase family. As to quaternary structure, dimer of dimers. K(+) is required as a cofactor.

It carries out the reaction betaine aldehyde + NAD(+) + H2O = glycine betaine + NADH + 2 H(+). Its pathway is amine and polyamine biosynthesis; betaine biosynthesis via choline pathway; betaine from betaine aldehyde: step 1/1. Functionally, involved in the biosynthesis of the osmoprotectant glycine betaine. Catalyzes the irreversible oxidation of betaine aldehyde to the corresponding acid. In Paraburkholderia phytofirmans (strain DSM 17436 / LMG 22146 / PsJN) (Burkholderia phytofirmans), this protein is Betaine aldehyde dehydrogenase.